The sequence spans 406 residues: Peptidase T (406 aa).

His-82 lines the Zn(2+) pocket. The active site involves Asp-84. Asp-142 lines the Zn(2+) pocket. Glu-176 acts as the Proton acceptor in catalysis. 3 residues coordinate Zn(2+): Glu-177, Asp-199, and His-381.

This sequence belongs to the peptidase M20B family. Zn(2+) serves as cofactor.

The protein resides in the cytoplasm. It carries out the reaction Release of the N-terminal residue from a tripeptide.. Its function is as follows. Cleaves the N-terminal amino acid of tripeptides. The protein is Peptidase T of Streptococcus agalactiae serotype III (strain NEM316).